Here is a 236-residue protein sequence, read N- to C-terminus: uncharacterized protein (236 aa).

To M.tuberculosis Rv2557.

This is an uncharacterized protein from Mycobacterium tuberculosis (strain CDC 1551 / Oshkosh).